A 346-amino-acid polypeptide reads, in one-letter code: Upstream stimulatory factor 2 (346 aa).

Disordered regions lie at residues 1–44 (MDML…PGAE) and 215–244 (APRT…NEVE). Low complexity predominate over residues 11–20 (AASATAAAAA). A compositionally biased stretch (basic and acidic residues) spans 226 to 244 (DGTRTPRDERRRAQHNEVE). The bHLH domain maps to 235–290 (RRRAQHNEVERRRRDKINNWIVQLSKIIPDCNADNSKTGASKGGILSKACDYIREL). The interval 307 to 328 (LQMDNELLRQQIEELKNENALL) is leucine-zipper.

Interacts with MAF. Efficient DNA binding requires dimerization with another bHLH protein. Binds DNA as a homodimer or a heterodimer (USF1/USF2). In vivo, the USF1/USF2A heterodimer represents over 66% of the usf binding activity whereas the USF1 and USF2A homodimers represent less than 10%. The USF1/USF2B heterodimer accounted for almost 15% in some cell. As to expression, ubiquitous.

The protein localises to the nucleus. Functionally, transcription factor that binds to a symmetrical DNA sequence (E-boxes) (5'-CACGTG-3') that is found in a variety of viral and cellular promoters. In Homo sapiens (Human), this protein is Upstream stimulatory factor 2 (USF2).